The primary structure comprises 885 residues: Chromatin structure-remodeling complex protein RSC3 (885 aa).

Positions 14–42 (CVQCRKRKIGCDRVKPICGNCMKHNKMDC) form a DNA-binding region, zn(2)-C6 fungal-type. Phosphoserine occurs at positions 95 and 236.

Forms a heteromer with RSC30. Interacts with LDB7 and NPL6. Component of the two forms of the RSC complex composed of at least either RSC1 or RSC2, and ARP7, ARP9, LDB7, NPL6, RSC3, RSC30, RSC4, RSC58, RSC6, RSC8, RSC9, SFH1, STH1, HTL1 and probably RTT102. The complexes interact with histone and histone variant components of centromeric chromatin. Component of a fungal-specific module (HTL1-LDB7-NPL6-RSC3-RSC30) within the RSC complex.

It is found in the nucleus. Functionally, component of the chromatin structure-remodeling complex (RSC), which is involved in transcription regulation and nucleosome positioning. RSC is responsible for the transfer of a histone octamer from a nucleosome core particle to naked DNA. The reaction requires ATP and involves an activated RSC-nucleosome intermediate. Remodeling reaction also involves DNA translocation, DNA twist and conformational change. As a reconfigurer of centromeric and flanking nucleosomes, RSC complex is required both for proper kinetochore function in chromosome segregation and, via a PKC1-dependent signaling pathway, for organization of the cellular cytoskeleton. This subunit is required for transcription of ribosomal protein genes and genes involved in the integrity of the cell wall, and also for proper metaphase progression. Together with HTL1, LDB7, NPL6, RSC30 components, defines a fungal-specific module within the RSC complex that plays a role in many cellular functions including the maintenance of cell wall integrity. In Saccharomyces cerevisiae (strain ATCC 204508 / S288c) (Baker's yeast), this protein is Chromatin structure-remodeling complex protein RSC3 (RSC3).